The chain runs to 227 residues: Ribose-5-phosphate isomerase A (227 aa).

Substrate-binding positions include 26–29, 82–85, and 95–98; these read TGST, DGAD, and KGGG. The active-site Proton acceptor is Glu104. Lys122 provides a ligand contact to substrate.

It belongs to the ribose 5-phosphate isomerase family. In terms of assembly, homodimer.

It carries out the reaction aldehydo-D-ribose 5-phosphate = D-ribulose 5-phosphate. Its pathway is carbohydrate degradation; pentose phosphate pathway; D-ribose 5-phosphate from D-ribulose 5-phosphate (non-oxidative stage): step 1/1. Its function is as follows. Catalyzes the reversible conversion of ribose-5-phosphate to ribulose 5-phosphate. The chain is Ribose-5-phosphate isomerase A from Streptococcus pneumoniae serotype 4 (strain ATCC BAA-334 / TIGR4).